A 78-amino-acid polypeptide reads, in one-letter code: uncharacterized protein (78 aa).

Over residues 56 to 66 the composition is skewed to basic and acidic residues; that stretch reads ERANAGKRVSE. Residues 56 to 78 are disordered; the sequence is ERANAGKRVSEEEQINGKRKRKD.

This is an uncharacterized protein from Saccharomyces cerevisiae (strain ATCC 204508 / S288c) (Baker's yeast).